The primary structure comprises 597 residues: MDHIRNFSIIAHIDHGKSTLADRIIQICGGLSDREMEAQVLDSMDLERERGITIKAQTAALSYRARDGKLYNLNMIDTPGHVDFSYEVSRSLSACEGALLVVDASQGVEAQTVANCYTAIELGVEVVPVLNKIDLPAANPENAIAEIEDVIGIDAADATPCSAKTGMGVEDVLEALIAKVPPPKGDAGQPLQALIIDSWFDNYVGVVMLVRIVNGTLRPKDRIRLMATGAEYPVEHVGVFTPKSKNLESLSAGQVGFIIAGIKELTAAKVGDTVTTVKNAAPEPLPGFKEVKPQVFAGLYPVEANQYDALRESLEKLKLNDASLMYEPEVSQALGFGFRCGFLGLLHMEIVQERLEREFDMDLITTAPTVVYEVVQRDGTTIMVENPAKMPDPSKIEEVREPIVTVNLYMPQDYVGSVITLCTQKRGVQINMQYHGRQVQLTYEIPMGEIVLDFFDRLKSVSRGYASMDYEFKEYRASDVVKVDMLINGDKVDALSVIVHRSQSQYRGREVASKMREIIPRQMYDVAIQATIGAHIIARENIKALRKNVLAKCYGGDITRKKKLLEKQKEGKKRMKQVGSVEIPQEAFLAILRVEDK.

Residues 2 to 184 (DHIRNFSIIA…ALIAKVPPPK (183 aa)) form the tr-type G domain. GTP is bound by residues 14–19 (DHGKST) and 131–134 (NKID).

This sequence belongs to the TRAFAC class translation factor GTPase superfamily. Classic translation factor GTPase family. LepA subfamily.

The protein resides in the cell inner membrane. It catalyses the reaction GTP + H2O = GDP + phosphate + H(+). In terms of biological role, required for accurate and efficient protein synthesis under certain stress conditions. May act as a fidelity factor of the translation reaction, by catalyzing a one-codon backward translocation of tRNAs on improperly translocated ribosomes. Back-translocation proceeds from a post-translocation (POST) complex to a pre-translocation (PRE) complex, thus giving elongation factor G a second chance to translocate the tRNAs correctly. Binds to ribosomes in a GTP-dependent manner. The chain is Elongation factor 4 from Paraburkholderia phymatum (strain DSM 17167 / CIP 108236 / LMG 21445 / STM815) (Burkholderia phymatum).